The primary structure comprises 570 residues: 4-coumarate--CoA ligase 4 (570 aa).

Ser218, Ser219, Gly220, Thr221, Thr222, and Lys226 together coordinate ATP. Tyr268 contacts (E)-4-coumaroyl-AMP. Arg289 provides a ligand contact to CoA. The segment at 291-360 is SBD1; it reads ELNLVMELIQ…LKFPNAIFGQ (70 aa). (E)-4-coumaroyl-AMP contacts are provided by Ala338, Gln360, Gly361, and Thr365. 5 residues coordinate ATP: Gln360, Gly361, Thr365, Asp448, and Arg463. The segment at 361-427 is SBD2; it reads GYGMTESGTV…VRGHQLMKGY (67 aa). 2 residues coordinate (E)-4-coumaroyl-AMP: Lys465 and Lys469. CoA-binding residues include Lys471 and Gly472. Lys554 is an ATP binding site.

Belongs to the ATP-dependent AMP-binding enzyme family. Mg(2+) serves as cofactor.

It catalyses the reaction (E)-sinapate + ATP + CoA = (E)-sinapoyl-CoA + AMP + diphosphate. The enzyme catalyses (E)-4-coumarate + ATP + CoA = (E)-4-coumaroyl-CoA + AMP + diphosphate. The catalysed reaction is (E)-caffeate + ATP + CoA = (E)-caffeoyl-CoA + AMP + diphosphate. It carries out the reaction (E)-ferulate + ATP + CoA = (E)-feruloyl-CoA + AMP + diphosphate. It catalyses the reaction (E)-sinapate + ATP + H(+) = (E)-sinapoyl-AMP + diphosphate. The enzyme catalyses (E)-sinapoyl-AMP + CoA = (E)-sinapoyl-CoA + AMP + H(+). The catalysed reaction is (E)-4-coumarate + ATP + H(+) = (E)-4-coumaroyl-AMP + diphosphate. It carries out the reaction (E)-4-coumaroyl-AMP + CoA = (E)-4-coumaroyl-CoA + AMP + H(+). It catalyses the reaction (E)-caffeate + ATP + H(+) = (E)-caffeoyl-AMP + diphosphate. The enzyme catalyses (E)-caffeoyl-AMP + CoA = (E)-caffeoyl-CoA + AMP + H(+). The catalysed reaction is (E)-ferulate + ATP + H(+) = (E)-feruloyl-AMP + diphosphate. It carries out the reaction (E)-feruloyl-AMP + CoA = (E)-feruloyl-CoA + AMP + H(+). Its pathway is phytoalexin biosynthesis; 3,4',5-trihydroxystilbene biosynthesis; 3,4',5-trihydroxystilbene from trans-4-coumarate: step 1/2. Its function is as follows. Produces CoA thioesters of a variety of hydroxy- and methoxy-substituted cinnamic acids, which are used to synthesize several phenylpropanoid-derived compounds, including anthocyanins, flavonoids, isoflavonoids, coumarins, lignin, suberin and wall-bound phenolics. Follows a two-step reaction mechanism, wherein the carboxylate substrate first undergoes adenylation by ATP, followed by a thioesterification in the presence of CoA to yield the final CoA thioesters. In Arabidopsis thaliana (Mouse-ear cress), this protein is 4-coumarate--CoA ligase 4.